The primary structure comprises 694 residues: Glycine--tRNA ligase beta subunit (694 aa).

Belongs to the class-II aminoacyl-tRNA synthetase family. In terms of assembly, tetramer of two alpha and two beta subunits.

The protein resides in the cytoplasm. The enzyme catalyses tRNA(Gly) + glycine + ATP = glycyl-tRNA(Gly) + AMP + diphosphate. The sequence is that of Glycine--tRNA ligase beta subunit from Shewanella denitrificans (strain OS217 / ATCC BAA-1090 / DSM 15013).